Reading from the N-terminus, the 144-residue chain is Ribosomally synthesized cyclic peptide phomopsin precursor phomA' (144 aa).

A signal peptide spans 1-18 (MRFTPAIVIAAFCSLAVA). 9 propeptides span residues 19–35 (APAAKAIARSPSEAVED), 42–50 (KKRGEAVED), 57–65 (KKRGEAVED), 72–79 (KRGEAVED), 86–94 (KKRGEAVED), 101–108 (KRGEAVED), 115–123 (KKRGEAVED), 130–137 (KRGEAVED), and K144.

PhomA' is processed by several endopeptidases including kexin proteases as well as the cluster-specific S41 family peptidase phomP1' and the peptidase phomG' to produce 5 identical copies of the hexapeptide Tyr-Val-Ile-Pro-Ile-Asp and 3 identical copies of Tyr-Val-Ile-Pro-Phe-Asp, that are further modified into phomapsins A and P, respectively. The timing and order of proteolysis of the phomA' precursor and PTMs are still unknown. Two tyrosinase-like enzyme phomQ1' and PhomQ2, catalyze the chlorination and hydroxylation of Tyr, respectively. PhomYb', is proposed to be involved in the construction of the macrocyclic structure. The other four ustYa family proteins may be involved in PTMs that generate the unique structure of phomopsin A. PhomYa' is required for the hydroxylation of C-beta of Tyr. PhomYc', PhomYd', and PhomYe' are responsible for the biosynthesis of 2,3-dehydroisoleucine (dIle), 2,3-dehydroaspartic acid (dAsp), and 3,4-dehydroproline (dPro), respectively. While dIle formation by phomYc is indispensable for the installation of dAsp by phomYd, the order of the other PTMs have not been elucidated yet. Most of the biosynthetic enzymes likely have broad substrate specificity, and thus, there might be a metabolic grid from a precursor to phomopsin A. The enzyme(s) responsible for the biosynthesis of 3,4-dehydrovaline (dVal) have also not been identified yet. Finally, PhomM' acts as an S-adenosylmethionine-dependent alpha-N-methyltransferase that catalyzes two successive N-methylation reactions, converting N-desmethyl-phomopsin A to phomopsin A and phomopsin A further to an N,N-dimethylated congener called phomopsin E.

It participates in mycotoxin biosynthesis. Functionally, ribosomally synthesized cyclic peptide phomopsin precursor; part of the gene cluster that mediates the biosynthesis of the phomopsins, a group of hexapeptide mycotoxins which infects lupins and causes lupinosis disease in livestock. The phomA' translated product contains a 5-fold repeated peptide embedding the hexapeptide Tyr-Val-Ile-Pro-Ile-Asp and a 3-fold repeated peptide embedding the hexapeptide Tyr-Val-Ile-Pro-Phe-Asp, that is converted into phomapsin A and phomapsin P, respectively. After being excised from the precursor peptide by kexin proteases, the core peptides are cyclized and modified post-translationally by enzymes encoded within the corresponding gene cluster. The polypeptide is Ribosomally synthesized cyclic peptide phomopsin precursor phomA' (Diaporthe leptostromiformis (Lupinosis disease fungus)).